The following is a 420-amino-acid chain: Nucleoporin NUP42 (420 aa).

The C3H1-type zinc-finger motif lies at 1-25 (MTICQFFLQGRCRFGDRCWNEHPGA). The stretch at 14–15 (FG) is one FG 1 repeat. Positions 25 to 111 (ARGAGGARQP…FASPLSDEQK (87 aa)) are disordered. The segment covering 42–67 (SGNNRRGWNASSQRYSNVIQPSSFPK) has biased composition (polar residues). FG repeat units follow at residues 82–83 (FG), 95–96 (FG), 218–219 (FG), 220–221 (FG), 228–229 (FG), 265–266 (FG), 271–272 (FG), 288–289 (FG), 345–346 (FG), and 364–365 (FG). Residues 87–102 (SGASTSRGFGSSQNPF) show a composition bias toward polar residues. Residues 323–345 (MAASPSGSTTAPPLRSGSSVVGF) are disordered. Positions 365 to 420 (GGSGISTSVLASGAADNALFTPRDQLMKEELEQFQSQRFTLGKIPLKPPPVELLTV) are interaction with GLE1.

As to quaternary structure, probable component of the nuclear pore complex (NPC). Interacts with nuclear export protein NXF1. Interacts with GLE1. Able to form a heterotrimer with NUP155 and GLE1 in vitro. Interacts with XPO1. O-glycosylated.

Its subcellular location is the nucleus. It is found in the nuclear pore complex. The protein localises to the nucleus membrane. In terms of biological role, required for the export of mRNAs containing poly(A) tails from the nucleus into the cytoplasm. This chain is Nucleoporin NUP42 (Nup42), found in Mus musculus (Mouse).